Here is a 355-residue protein sequence, read N- to C-terminus: 45 kDa calcium-binding protein (355 aa).

The N-terminal stretch at 1-29 is a signal peptide; the sequence is MASRQGPLCGLAPCCLWLLGVILLMNASA. Asn26 carries N-linked (GlcNAc...) asparagine glycosylation. EF-hand domains follow at residues 91–126 and 130–165; these read KSRR…KTAE and EAVA…TKGH. Position 92 is a phosphoserine (Ser92). Residues Asp104, Asn106, Asp108, Arg110, Glu115, Asp143, Asp145, Asp147, His149, and Glu154 each contribute to the Ca(2+) site. Residues Thr186 and Thr210 each carry the phosphothreonine modification. 3 EF-hand domains span residues 226–261, 271–306, and 307–342; these read MLQF…TVEN, WVRD…MNEF, and SALN…FTGS. Residues Asp239, Asp241, Asp243, Lys245, and Glu250 each contribute to the Ca(2+) site. Position 258 is a phosphothreonine (Thr258). Ca(2+) contacts are provided by Asp284, Asn286, and Asp288. Residue Thr292 is modified to Phosphothreonine. Ca(2+) contacts are provided by Glu295, Asp320, Asn322, Asn324, Tyr326, and Glu331. The segment at 302 to 355 is necessary for intracellular retention in Golgi apparatus lumen; that stretch reads PMNEFSALNEAKQMIAIADENQNHYLEPEEVLKYSEFFTGSKLVDYARSVHEEF.

It belongs to the CREC family.

It localises to the golgi apparatus lumen. Functionally, may regulate calcium-dependent activities in the endoplasmic reticulum lumen or post-ER compartment. This Capra hircus (Goat) protein is 45 kDa calcium-binding protein (SDF4).